The sequence spans 180 residues: Hypoxanthine-guanine phosphoribosyltransferase (180 aa).

Residues lysine 43 and glycine 44 each contribute to the diphosphate site. The Mg(2+) site is built by glutamate 99 and aspartate 100. Aspartate 103 (proton acceptor) is an active-site residue. Residues lysine 131, 152–153 (FV), and aspartate 159 each bind GMP. Arginine 165 contacts diphosphate.

This sequence belongs to the purine/pyrimidine phosphoribosyltransferase family. The cofactor is Mg(2+).

Its subcellular location is the cytoplasm. The enzyme catalyses IMP + diphosphate = hypoxanthine + 5-phospho-alpha-D-ribose 1-diphosphate. The catalysed reaction is GMP + diphosphate = guanine + 5-phospho-alpha-D-ribose 1-diphosphate. It functions in the pathway purine metabolism; IMP biosynthesis via salvage pathway; IMP from hypoxanthine: step 1/1. It participates in purine metabolism; GMP biosynthesis via salvage pathway; GMP from guanine: step 1/1. Its function is as follows. Purine salvage pathway enzyme that catalyzes the transfer of the ribosyl-5-phosphate group from 5-phospho-alpha-D-ribose 1-diphosphate (PRPP) to the N9 position of the 6-oxopurines hypoxanthine and guanine to form the corresponding ribonucleotides IMP (inosine 5'-monophosphate) and GMP (guanosine 5'-monophosphate), with the release of PPi. The sequence is that of Hypoxanthine-guanine phosphoribosyltransferase (hprT) from Bacillus subtilis (strain 168).